The chain runs to 176 residues: Peptide deformylase (176 aa).

Fe cation-binding residues include C94 and H136. E137 is a catalytic residue. A Fe cation-binding site is contributed by H140.

It belongs to the polypeptide deformylase family. Requires Fe(2+) as cofactor.

The enzyme catalyses N-terminal N-formyl-L-methionyl-[peptide] + H2O = N-terminal L-methionyl-[peptide] + formate. Functionally, removes the formyl group from the N-terminal Met of newly synthesized proteins. Requires at least a dipeptide for an efficient rate of reaction. N-terminal L-methionine is a prerequisite for activity but the enzyme has broad specificity at other positions. In Bartonella quintana (strain Toulouse) (Rochalimaea quintana), this protein is Peptide deformylase.